The chain runs to 20 residues: Pregnancy-associated glycoprotein 55h (20 aa).

N-linked (GlcNAc...) asparagine glycosylation occurs at Asn4.

This sequence belongs to the peptidase A1 family. In terms of tissue distribution, highly expressed in the placenta between day 60 and day 100 of gestation.

Its subcellular location is the secreted. It localises to the extracellular space. The sequence is that of Pregnancy-associated glycoprotein 55h from Ovis aries (Sheep).